Here is a 76-residue protein sequence, read N- to C-terminus: Signal recognition particle 9 kDa protein (76 aa).

The protein belongs to the SRP9 family. As to quaternary structure, heterodimer with SRP14; binds RNA as heterodimer. Component of a signal recognition particle complex that consists of a 7SL RNA molecule of 300 nucleotides and six protein subunits: srpa-72, srpa-68, SRP54, F37F2.2/SRP19, F25G6.8/SRP14 and ZK512.4/SRP9.

It localises to the cytoplasm. Functionally, component of the signal recognition particle (SRP) complex, a ribonucleoprotein complex that mediates the cotranslational targeting of secretory and membrane proteins to the endoplasmic reticulum (ER). SRP9 together with SRP14 and the Alu portion of the SRP RNA, constitutes the elongation arrest domain of SRP. The complex of SRP9 and SRP14 is required for SRP RNA binding. In Caenorhabditis elegans, this protein is Signal recognition particle 9 kDa protein.